We begin with the raw amino-acid sequence, 655 residues long: Serine/threonine-protein kinase SKM1 (655 aa).

The 116-residue stretch at 3-118 folds into the PH domain; it reads GVKKEGWISY…WLDAIFAKCP (116 aa). The CRIB domain maps to 123–136; it reads VSSPTNFTHKVHVG. Basic and acidic residues-rich tracts occupy residues 265-276 and 318-327; these read EEGRVHVSKEST and KNHDSKTKWH. A disordered region spans residues 265-327; sequence EEGRVHVSKE…KNHDSKTKWH (63 aa). The 280-residue stretch at 360-639 folds into the Protein kinase domain; that stretch reads FQLVEKAGQG…VRKLLTFEFL (280 aa). ATP contacts are provided by residues 366–374 and Lys406; that span reads AGQGASGAV. Residue Asp507 is the Proton acceptor of the active site.

It belongs to the protein kinase superfamily. STE Ser/Thr protein kinase family. STE20 subfamily.

It catalyses the reaction L-seryl-[protein] + ATP = O-phospho-L-seryl-[protein] + ADP + H(+). The enzyme catalyses L-threonyl-[protein] + ATP = O-phospho-L-threonyl-[protein] + ADP + H(+). Functionally, may be involved in cellular signaling or cytoskeletal functions. May play a role in morphogenetic control. The polypeptide is Serine/threonine-protein kinase SKM1 (SKM1) (Saccharomyces cerevisiae (strain ATCC 204508 / S288c) (Baker's yeast)).